Reading from the N-terminus, the 394-residue chain is 1-deoxy-D-xylulose 5-phosphate reductoisomerase (394 aa).

NADPH-binding residues include Thr10, Gly11, Ser12, Ile13, Asn38, and Asn125. A 1-deoxy-D-xylulose 5-phosphate-binding site is contributed by Lys126. Glu127 is an NADPH binding site. Mn(2+) is bound at residue Asp151. 1-deoxy-D-xylulose 5-phosphate is bound by residues Ser152, Glu153, Ser182, and His205. Mn(2+) is bound at residue Glu153. Gly211 lines the NADPH pocket. The 1-deoxy-D-xylulose 5-phosphate site is built by Ser218, Asn223, Lys224, and Glu227. A Mn(2+)-binding site is contributed by Glu227.

The protein belongs to the DXR family. Requires Mg(2+) as cofactor. Mn(2+) serves as cofactor.

It catalyses the reaction 2-C-methyl-D-erythritol 4-phosphate + NADP(+) = 1-deoxy-D-xylulose 5-phosphate + NADPH + H(+). It functions in the pathway isoprenoid biosynthesis; isopentenyl diphosphate biosynthesis via DXP pathway; isopentenyl diphosphate from 1-deoxy-D-xylulose 5-phosphate: step 1/6. Catalyzes the NADPH-dependent rearrangement and reduction of 1-deoxy-D-xylulose-5-phosphate (DXP) to 2-C-methyl-D-erythritol 4-phosphate (MEP). This chain is 1-deoxy-D-xylulose 5-phosphate reductoisomerase, found in Methylococcus capsulatus (strain ATCC 33009 / NCIMB 11132 / Bath).